Consider the following 425-residue polypeptide: MLTTRPRGTNDILPGEVEKWQYIESQFRRICREYGYGEIRTPVFEHTELFLRGVGDTTDIVEKEMYTFTDRGGRSITLRPENTAPAVRAYLENRLYAGPQPVKLFYAGPMFRYDRPQAGRFRQFHQLGVEVFGSHDPAVDAEVMAMAMDFYGRLGLKNLELHINSVGCPVCRPLLRRRLQDYFRPHLERLCKNCRSRFDKNPLRVLDCKEAACAEIGADAPFAIDCLCESCLEHFEKVKKYLELLNVSYTVNRRLVRGLDYYTHTAFEVTARDIGAQSSIGGGGRYNGLVEVCGGPPTPGVGYALGLERIILALRQQGIGLPGESGPEVFLATAGQAVMPEAFGLLFRLRSAGISADKDYLDRSLKAQMKYAGKIGARYAVIIGESELKQGTVLVRDMAAGEQSAVKLDGVLQYLREKITGRKQS.

It belongs to the class-II aminoacyl-tRNA synthetase family. In terms of assembly, homodimer.

It localises to the cytoplasm. The enzyme catalyses tRNA(His) + L-histidine + ATP = L-histidyl-tRNA(His) + AMP + diphosphate + H(+). In Pelotomaculum thermopropionicum (strain DSM 13744 / JCM 10971 / SI), this protein is Histidine--tRNA ligase.